Consider the following 323-residue polypeptide: Fructose-bisphosphate aldolase (323 aa).

Serine 50 contributes to the beta-D-fructose 1,6-bisphosphate binding site. Residue aspartate 83 is the Proton donor of the active site. The Zn(2+) site is built by histidine 84 and histidine 178. Beta-D-fructose 1,6-bisphosphate-binding residues include histidine 178, glycine 179, and lysine 182. Histidine 210 contacts Zn(2+). Beta-D-fructose 1,6-bisphosphate is bound by residues glycine 211, serine 213, asparagine 253, aspartate 255, serine 256, arginine 259, and arginine 280.

It belongs to the class II fructose-bisphosphate aldolase family. As to quaternary structure, homodimer. The cofactor is Zn(2+).

It catalyses the reaction beta-D-fructose 1,6-bisphosphate = D-glyceraldehyde 3-phosphate + dihydroxyacetone phosphate. Its pathway is carbohydrate degradation; glycolysis; D-glyceraldehyde 3-phosphate and glycerone phosphate from D-glucose: step 4/4. In terms of biological role, plays a key role in glycolysis by catalyzing the cleavage of fructose 1,6-bisphosphate into dihydroxyacetone phosphate and glyceraldehyde 3-phosphate. Does not cleave D-tagatose-1,6-bisphosphate. In Giardia intestinalis (strain ATCC 50803 / WB clone C6) (Giardia lamblia), this protein is Fructose-bisphosphate aldolase.